The chain runs to 127 residues: Putative adhesin P1-like protein MPN_203 (127 aa).

A disordered region spans residues Thr-70–Phe-90.

It belongs to the adhesin P1 family.

The protein is Putative adhesin P1-like protein MPN_203 of Mycoplasma pneumoniae (strain ATCC 29342 / M129 / Subtype 1) (Mycoplasmoides pneumoniae).